The sequence spans 537 residues: Glucans biosynthesis protein D 2 (537 aa).

The tat-type signal signal peptide spans 1 to 28; sequence MVTRRHLLASASLSATLAALGITPEALA.

This sequence belongs to the OpgD/OpgG family. Post-translationally, predicted to be exported by the Tat system. The position of the signal peptide cleavage has not been experimentally proven.

It is found in the periplasm. It participates in glycan metabolism; osmoregulated periplasmic glucan (OPG) biosynthesis. Its function is as follows. Probably involved in the control of the structural glucose backbone of osmoregulated periplasmic glucans (OPGs). This is Glucans biosynthesis protein D 2 (opgD2) from Ralstonia nicotianae (strain ATCC BAA-1114 / GMI1000) (Ralstonia solanacearum).